We begin with the raw amino-acid sequence, 835 residues long: uncharacterized protein (835 aa).

Disordered regions lie at residues 1–38 (MKTS…VGSR), 317–477 (DFDL…QSGR), 489–668 (SLSK…IKRR), 721–750 (DLEN…VSSF), and 810–835 (QEQQ…ELMF). Composition is skewed to low complexity over residues 7–37 (STVP…TVGS), 328–351 (NNNN…TPTT), and 361–395 (SSTN…SGSS). 2 stretches are compositionally biased toward polar residues: residues 396–406 (IGNRTEVSSSI) and 415–424 (IIRSKSSLGT). The segment covering 432–442 (GGSGGGGGGGM) has biased composition (gly residues). Over residues 449–477 (PISKTPTTMITKTASSSSPNLATSTQSGR) the composition is skewed to polar residues. Over residues 489–510 (SLSKQSSSSNLTRSLPPIIKSP) the composition is skewed to low complexity. Residues 511-521 (ISPPGPTPPAP) are compositionally biased toward pro residues. The span at 522-629 (TLTKSKSTPS…STTSSATKKS (108 aa)) shows a compositional bias: low complexity. Residues 631–640 (ITKTNPTDEQ) show a composition bias toward polar residues. 2 stretches are compositionally biased toward low complexity: residues 641-664 (TTTP…STSS) and 724-750 (NNNN…VSSF). Positions 826-835 (ILDEDDELMF) are enriched in acidic residues.

This is an uncharacterized protein from Dictyostelium discoideum (Social amoeba).